Here is a 273-residue protein sequence, read N- to C-terminus: Ribosomal RNA small subunit methyltransferase A (273 aa).

The S-adenosyl-L-methionine site is built by Asn-20, Leu-22, Gly-47, Glu-68, Asp-90, and Asn-110.

The protein belongs to the class I-like SAM-binding methyltransferase superfamily. rRNA adenine N(6)-methyltransferase family. RsmA subfamily.

The protein localises to the cytoplasm. It catalyses the reaction adenosine(1518)/adenosine(1519) in 16S rRNA + 4 S-adenosyl-L-methionine = N(6)-dimethyladenosine(1518)/N(6)-dimethyladenosine(1519) in 16S rRNA + 4 S-adenosyl-L-homocysteine + 4 H(+). In terms of biological role, specifically dimethylates two adjacent adenosines (A1518 and A1519) in the loop of a conserved hairpin near the 3'-end of 16S rRNA in the 30S particle. May play a critical role in biogenesis of 30S subunits. The protein is Ribosomal RNA small subunit methyltransferase A of Chlorobium luteolum (strain DSM 273 / BCRC 81028 / 2530) (Pelodictyon luteolum).